A 270-amino-acid polypeptide reads, in one-letter code: S-adenosylmethionine decarboxylase proenzyme (270 aa).

The active-site Schiff-base intermediate with substrate; via pyruvic acid is S117. Pyruvic acid (Ser); by autocatalysis is present on S117. Residue H122 is the Proton acceptor; for processing activity of the active site. The active-site Proton donor; for catalytic activity is C145.

The protein belongs to the prokaryotic AdoMetDC family. Type 2 subfamily. As to quaternary structure, heterooctamer of four alpha and four beta chains arranged as a tetramer of alpha/beta heterodimers. The cofactor is pyruvate. Post-translationally, is synthesized initially as an inactive proenzyme. Formation of the active enzyme involves a self-maturation process in which the active site pyruvoyl group is generated from an internal serine residue via an autocatalytic post-translational modification. Two non-identical subunits are generated from the proenzyme in this reaction, and the pyruvate is formed at the N-terminus of the alpha chain, which is derived from the carboxyl end of the proenzyme. The post-translation cleavage follows an unusual pathway, termed non-hydrolytic serinolysis, in which the side chain hydroxyl group of the serine supplies its oxygen atom to form the C-terminus of the beta chain, while the remainder of the serine residue undergoes an oxidative deamination to produce ammonia and the pyruvoyl group blocking the N-terminus of the alpha chain.

It catalyses the reaction S-adenosyl-L-methionine + H(+) = S-adenosyl 3-(methylsulfanyl)propylamine + CO2. The protein operates within amine and polyamine biosynthesis; S-adenosylmethioninamine biosynthesis; S-adenosylmethioninamine from S-adenosyl-L-methionine: step 1/1. Functionally, catalyzes the decarboxylation of S-adenosylmethionine to S-adenosylmethioninamine (dcAdoMet), the propylamine donor required for the synthesis of the polyamines spermine and spermidine from the diamine putrescine. The chain is S-adenosylmethionine decarboxylase proenzyme from Pseudoalteromonas translucida (strain TAC 125).